The sequence spans 338 residues: Isopentenyl-diphosphate delta-isomerase (338 aa).

13 to 14 (RK) serves as a coordination point for substrate. FMN contacts are provided by residues 72-74 (AMT), Ser102, and Asn130. A substrate-binding site is contributed by 102–104 (SQR). Gln165 provides a ligand contact to substrate. Residue Glu166 participates in Mg(2+) binding. FMN contacts are provided by residues Lys197, Thr227, 274–276 (GIR), and 295–296 (AR).

The protein belongs to the IPP isomerase type 2 family. In terms of assembly, homooctamer. Dimer of tetramers. It depends on FMN as a cofactor. The cofactor is NADPH. Requires Mg(2+) as cofactor.

The protein localises to the cytoplasm. The catalysed reaction is isopentenyl diphosphate = dimethylallyl diphosphate. Its function is as follows. Involved in the biosynthesis of isoprenoids. Catalyzes the 1,3-allylic rearrangement of the homoallylic substrate isopentenyl (IPP) to its allylic isomer, dimethylallyl diphosphate (DMAPP). This chain is Isopentenyl-diphosphate delta-isomerase, found in Deinococcus radiodurans (strain ATCC 13939 / DSM 20539 / JCM 16871 / CCUG 27074 / LMG 4051 / NBRC 15346 / NCIMB 9279 / VKM B-1422 / R1).